Reading from the N-terminus, the 210-residue chain is NADH dehydrogenase [ubiquinone] iron-sulfur protein 8, mitochondrial (210 aa).

The N-terminal 34 residues, 1–34 (MRCLTTPMLLRALAQAARAGPPCGRSLHSSAVAA), are a transit peptide targeting the mitochondrion. 4Fe-4S ferredoxin-type domains lie at 102–131 (RRYP…IEAE) and 141–170 (TRYD…EGPN). 8 residues coordinate [4Fe-4S] cluster: Cys-111, Cys-114, Cys-117, Cys-121, Cys-150, Cys-153, Cys-156, and Cys-160.

Belongs to the complex I 23 kDa subunit family. As to quaternary structure, core subunit of respiratory chain NADH dehydrogenase (Complex I) which is composed of 45 different subunits. This is a component of the iron-sulfur (IP) fragment of the enzyme. Interacts with RAB5IF. Requires [4Fe-4S] cluster as cofactor.

Its subcellular location is the mitochondrion inner membrane. The enzyme catalyses a ubiquinone + NADH + 5 H(+)(in) = a ubiquinol + NAD(+) + 4 H(+)(out). Core subunit of the mitochondrial membrane respiratory chain NADH dehydrogenase (Complex I) which catalyzes electron transfer from NADH through the respiratory chain, using ubiquinone as an electron acceptor. Essential for the catalytic activity and assembly of complex I. In Pongo abelii (Sumatran orangutan), this protein is NADH dehydrogenase [ubiquinone] iron-sulfur protein 8, mitochondrial (NDUFS8).